The chain runs to 415 residues: Mitochondrial tRNA-specific 2-thiouridylase 1 (415 aa).

ATP is bound by residues 37-44 (AMSGGVDS) and M63. The interaction with target base in tRNA stretch occupies residues 124 to 126 (NPD). Residue C129 is the Nucleophile of the active site. C129 and C234 are joined by a disulfide. G159 lines the ATP pocket. An interaction with tRNA region spans residues 183–185 (KDQ). C234 acts as the Cysteine persulfide intermediate in catalysis. Residues 356 to 357 (RH) form an interaction with tRNA region.

Belongs to the MnmA/TRMU family.

It localises to the mitochondrion. It carries out the reaction 5-taurinomethyluridine(34) in tRNA + S-sulfanyl-L-cysteinyl-[protein] + AH2 + ATP = 5-taurinomethyl-2-thiouridine(34) in tRNA + L-cysteinyl-[protein] + A + AMP + diphosphate + H(+). Functionally, catalyzes the 2-thiolation of uridine at the wobble position (U34) of mitochondrial tRNA(Lys), tRNA(Glu) and tRNA(Gln). Required for the formation of 5-taurinomethyl-2-thiouridine (tm5s2U) of mitochondrial tRNA(Lys), tRNA(Glu), and tRNA(Gln) at the wobble position. ATP is required to activate the C2 atom of the wobble base. This is Mitochondrial tRNA-specific 2-thiouridylase 1 from Schizosaccharomyces pombe (strain 972 / ATCC 24843) (Fission yeast).